Reading from the N-terminus, the 291-residue chain is Ribosomal RNA small subunit methyltransferase A (291 aa).

The S-adenosyl-L-methionine site is built by His-37, Leu-39, Gly-64, Glu-85, Asp-110, and Asn-131.

This sequence belongs to the class I-like SAM-binding methyltransferase superfamily. rRNA adenine N(6)-methyltransferase family. RsmA subfamily.

It is found in the cytoplasm. It catalyses the reaction adenosine(1518)/adenosine(1519) in 16S rRNA + 4 S-adenosyl-L-methionine = N(6)-dimethyladenosine(1518)/N(6)-dimethyladenosine(1519) in 16S rRNA + 4 S-adenosyl-L-homocysteine + 4 H(+). Its function is as follows. Specifically dimethylates two adjacent adenosines (A1518 and A1519) in the loop of a conserved hairpin near the 3'-end of 16S rRNA in the 30S particle. May play a critical role in biogenesis of 30S subunits. In Dehalococcoides mccartyi (strain ATCC BAA-2266 / KCTC 15142 / 195) (Dehalococcoides ethenogenes (strain 195)), this protein is Ribosomal RNA small subunit methyltransferase A.